Here is a 576-residue protein sequence, read N- to C-terminus: Arginine--tRNA ligase (576 aa).

The short motif at 122-132 is the 'HIGH' region element; sequence PNVAKQMHVGH.

Belongs to the class-I aminoacyl-tRNA synthetase family. In terms of assembly, monomer.

The protein localises to the cytoplasm. The catalysed reaction is tRNA(Arg) + L-arginine + ATP = L-arginyl-tRNA(Arg) + AMP + diphosphate. The protein is Arginine--tRNA ligase of Yersinia pseudotuberculosis serotype IB (strain PB1/+).